A 323-amino-acid polypeptide reads, in one-letter code: tRNA U34 carboxymethyltransferase (323 aa).

Residues lysine 90, tryptophan 104, lysine 109, glycine 129, 182-183 (IE), methionine 197, tyrosine 201, and arginine 316 each bind carboxy-S-adenosyl-L-methionine.

The protein belongs to the class I-like SAM-binding methyltransferase superfamily. CmoB family. As to quaternary structure, homotetramer.

It carries out the reaction carboxy-S-adenosyl-L-methionine + 5-hydroxyuridine(34) in tRNA = 5-carboxymethoxyuridine(34) in tRNA + S-adenosyl-L-homocysteine + H(+). Its function is as follows. Catalyzes carboxymethyl transfer from carboxy-S-adenosyl-L-methionine (Cx-SAM) to 5-hydroxyuridine (ho5U) to form 5-carboxymethoxyuridine (cmo5U) at position 34 in tRNAs. This is tRNA U34 carboxymethyltransferase from Idiomarina loihiensis (strain ATCC BAA-735 / DSM 15497 / L2-TR).